The following is a 140-amino-acid chain: Putative pre-16S rRNA nuclease (140 aa).

Belongs to the YqgF nuclease family.

It localises to the cytoplasm. Could be a nuclease involved in processing of the 5'-end of pre-16S rRNA. The protein is Putative pre-16S rRNA nuclease of Edwardsiella ictaluri (strain 93-146).